A 310-amino-acid polypeptide reads, in one-letter code: GPN-loop GTPase 2 (310 aa).

Position 2 is an N-acetylalanine (Ala2). GTP is bound at residue 19–24 (GSGKTT). The short motif at 76-78 (GPN) is the Gly-Pro-Asn (GPN)-loop; involved in dimer interface element. 178 to 181 (SKMD) contributes to the GTP binding site.

Belongs to the GPN-loop GTPase family. As to quaternary structure, heterodimers with GPN1 or GPN3. Binds to RNA polymerase II (RNAPII).

In terms of biological role, small GTPase required for proper localization of RNA polymerase II and III (RNAPII and RNAPIII). May act at an RNAP assembly step prior to nuclear import. The polypeptide is GPN-loop GTPase 2 (Mus musculus (Mouse)).